The sequence spans 23 residues: Phallacidin proprotein (23 aa).

Residue Pro-1 is a propeptide. The segment at residues Ala-2–Pro-8 is a cross-link (cyclopeptide (Ala-Pro)). Residues Trp-3–Cys-7 constitute a cross-link (2'-cysteinyl-6'-hydroxytryptophan sulfoxide (Trp-Cys)). A propeptide spanning residues Cys-9 to Lys-23 is cleaved from the precursor.

Belongs to the MSDIN fungal toxin family. Processed by the macrocyclase-peptidase enzyme POPB to yield a toxic cyclic heptapeptide. POPB first removes 10 residues from the N-terminus. Conformational trapping of the remaining peptide forces the enzyme to release this intermediate rather than proceed to macrocyclization. The enzyme rebinds the remaining peptide in a different conformation and catalyzes macrocyclization of the N-terminal 7 residues.

In terms of biological role, major toxin that belongs to the bicyclic heptapeptides called phallotoxins. Although structurally related to amatoxins, phallotoxins have a different mode of action, which is the stabilization of F-actin. Phallotoxins are poisonous when administered parenterally, but not orally because of poor absorption. This Amanita fuligineoides protein is Phallacidin proprotein.